A 533-amino-acid polypeptide reads, in one-letter code: Portal protein B (533 aa).

Belongs to the siphoviridae portal protein family. In terms of assembly, homododecamer. Interacts with the terminase complex composed of two small and one large terminase subunits. In terms of processing, proteolytically cleaved by the viral protease during capsid maturation.

The protein resides in the virion. Forms the portal vertex of the capsid. This portal plays critical roles in head assembly, genome packaging, neck/tail attachment, and genome ejection. The portal protein multimerizes as a single ring-shaped homododecamer arranged around a central channel. Binds to the terminase subunits to form the packaging machine. The protein is Portal protein B of Escherichia phage lambda (Bacteriophage lambda).